A 152-amino-acid polypeptide reads, in one-letter code: Snaclec 5 (152 aa).

The signal sequence occupies residues 1–23 (MGRFIFLSSGLLVVFLSLSGTGA). Intrachain disulfides connect Cys-27–Cys-38, Cys-55–Cys-148, and Cys-123–Cys-140. Residues 34-149 (YGQHCYRAFK…CASHNPFVCK (116 aa)) enclose the C-type lectin domain.

Belongs to the snaclec family. In terms of assembly, heterodimer; disulfide-linked. As to expression, expressed by the venom gland.

It localises to the secreted. Interferes with one step of hemostasis (modulation of platelet aggregation, or coagulation cascade, for example). This is Snaclec 5 from Bitis arietans (African puff adder).